The primary structure comprises 228 residues: Ribose-5-phosphate isomerase A (228 aa).

Substrate is bound by residues 32–35, 85–88, and 98–101; these read TGST, DGAD, and KGGG. The active-site Proton acceptor is the Glu-107. Lys-125 contacts substrate.

The protein belongs to the ribose 5-phosphate isomerase family. Homodimer.

The enzyme catalyses aldehydo-D-ribose 5-phosphate = D-ribulose 5-phosphate. It participates in carbohydrate degradation; pentose phosphate pathway; D-ribose 5-phosphate from D-ribulose 5-phosphate (non-oxidative stage): step 1/1. Catalyzes the reversible conversion of ribose-5-phosphate to ribulose 5-phosphate. The sequence is that of Ribose-5-phosphate isomerase A from Ralstonia pickettii (strain 12J).